Here is a 175-residue protein sequence, read N- to C-terminus: MDIAIHHPWIRRPFFPFHSPSRLFDQFFGEHLLESDLFPASTSLSPFYLRPPSFLRAPSWIDTGLSEMRLEKDRFSVNLDVKHFSPEELKVKVLGDVIEVHGKHEERQDEHGFISREFHRKYRIPADVDPLAITSSLSSDGVLTVNGPRKQASGPERTIPITREEKPAVTAAPKK.

At methionine 1 the chain carries N-acetylmethionine. The residue at position 19 (serine 19) is a Phosphoserine. Residue serine 41 is glycosylated (O-linked (GlcNAc) serine). Serine 45 and serine 59 each carry phosphoserine. The region spanning 56-164 (RAPSWIDTGL…PERTIPITRE (109 aa)) is the sHSP domain. Position 83 (histidine 83) interacts with Zn(2+). Residue lysine 90 is glycosylated (N-linked (Glc) (glycation) lysine). Lysine 92 carries the post-translational modification N6-acetyllysine; alternate. Lysine 92 carries an N-linked (Glc) (glycation) lysine; alternate glycan. Zn(2+) contacts are provided by histidine 104, glutamate 106, histidine 111, and histidine 119. A disordered region spans residues 144–175 (TVNGPRKQASGPERTIPITREEKPAVTAAPKK). Residue lysine 166 is modified to N6-acetyllysine. Threonine 170 carries O-linked (GlcNAc) threonine glycosylation.

It belongs to the small heat shock protein (HSP20) family. As to quaternary structure, heteromer composed of three CRYAA and one CRYAB subunits. Aggregates with homologous proteins, including the small heat shock protein HSPB1, to form large heteromeric complexes. Inter-subunit bridging via zinc ions enhances stability, which is crucial as there is no protein turn over in the lens. Interacts with HSPBAP1 and TTN/titin. Interacts with TMEM109; in the cellular response to DNA damage. Interacts with DES; binds rapidly during early stages of DES filament assembly and a reduced binding seen in the later stages. Interacts with TMED10; the interaction mediates the translocation from the cytoplasm into the ERGIC (endoplasmic reticulum-Golgi intermediate compartment) and thereby secretion. Interacts with ATP6V1A and with MTOR, forming a ternary complex. In terms of processing, it is not known whether either Lys-90, or Lys-92, or both are glycated. Lens as well as other tissues.

Its subcellular location is the cytoplasm. The protein localises to the nucleus. The protein resides in the secreted. It is found in the lysosome. May contribute to the transparency and refractive index of the lens. Has chaperone-like activity, preventing aggregation of various proteins under a wide range of stress conditions. In lens epithelial cells, stabilizes the ATP6V1A protein, preventing its degradation by the proteasome. The sequence is that of Alpha-crystallin B chain (CRYAB) from Bos taurus (Bovine).